A 193-amino-acid polypeptide reads, in one-letter code: Molybdenum cofactor guanylyltransferase (193 aa).

GTP is bound by residues 8 to 10, K21, D67, and D98; that span reads LAG. D98 is a Mg(2+) binding site.

It belongs to the MobA family. As to quaternary structure, monomer. It depends on Mg(2+) as a cofactor.

It is found in the cytoplasm. It carries out the reaction Mo-molybdopterin + GTP + H(+) = Mo-molybdopterin guanine dinucleotide + diphosphate. Functionally, transfers a GMP moiety from GTP to Mo-molybdopterin (Mo-MPT) cofactor (Moco or molybdenum cofactor) to form Mo-molybdopterin guanine dinucleotide (Mo-MGD) cofactor. In Cereibacter sphaeroides (Rhodobacter sphaeroides), this protein is Molybdenum cofactor guanylyltransferase.